The chain runs to 419 residues: L-rhamnose isomerase (419 aa).

The Mn(2+) site is built by histidine 262, aspartate 294, and aspartate 296.

The protein belongs to the rhamnose isomerase family. In terms of assembly, homotetramer. Requires Mn(2+) as cofactor.

The protein localises to the cytoplasm. The catalysed reaction is L-rhamnopyranose = L-rhamnulose. It participates in carbohydrate degradation; L-rhamnose degradation; glycerone phosphate from L-rhamnose: step 1/3. In terms of biological role, catalyzes the interconversion of L-rhamnose and L-rhamnulose. This chain is L-rhamnose isomerase, found in Escherichia coli O45:K1 (strain S88 / ExPEC).